We begin with the raw amino-acid sequence, 405 residues long: Aspartokinase (405 aa).

Residue 7–10 (KYGG) participates in ATP binding. 25–30 (RIAHYR) is a binding site for substrate. Residue Ser-41 coordinates ATP. Residues 47 to 49 (TDE), Glu-74, 125 to 126 (LD), 150 to 153 (RGGS), and Ser-153 each bind substrate. Residues 173-174 (TD), 179-184 (YTTDPH), and Arg-209 contribute to the ATP site. 2 consecutive ACT domains span residues 263-342 (IGLI…IAKV) and 344-405 (IVGV…LDKA). Substrate-binding positions include Asp-270, 274-275 (IA), 288-290 (AVD), Gln-294, 355-356 (VP), 369-370 (NI), and 376-377 (SE).

This sequence belongs to the aspartokinase family. Heterotetramer consisting of 2 isoforms Alpha (catalytic and regulation) and of a homodimer of 2 isoforms Beta (regulation and thermostability).

It catalyses the reaction L-aspartate + ATP = 4-phospho-L-aspartate + ADP. Its pathway is amino-acid biosynthesis; L-lysine biosynthesis via DAP pathway; (S)-tetrahydrodipicolinate from L-aspartate: step 1/4. The protein operates within amino-acid biosynthesis; L-methionine biosynthesis via de novo pathway; L-homoserine from L-aspartate: step 1/3. It functions in the pathway amino-acid biosynthesis; L-threonine biosynthesis; L-threonine from L-aspartate: step 1/5. With respect to regulation, inhibited by threonine. Its function is as follows. Catalyzes the phosphorylation of the beta-carboxyl group of aspartic acid with ATP to yield 4-phospho-L-aspartate, which is involved in the branched biosynthetic pathway leading to the biosynthesis of amino acids threonine, isoleucine and methionine. This Thermus thermophilus protein is Aspartokinase (ask).